Consider the following 1667-residue polypeptide: MASKQTKKKEVHRINSAHGSDKSKDFYPFGSNVQSGSTEQKKGKFPLWPEWSEADINSEKWDAGKGAKEKDKTGKSPVFHFFEDPEGKIELPPSLKIYSWKRPQDILFSQTPVVVKNEITFDLFSANEHLLCSELMRWIISEIYAVWKIFNGGILSNYFKGTSGEPPLLPWKPWEHIYSLCKAVKGHMPLFNSYGKYVVKLYWMGCWRKITIDDFLPFDEDNNLLLPATTYEFELWPMLLSKAIIKLANIDIHVADRRELGEFTVIHALTGWLPEVISLHPGYMDKVWELLKEILPEFKLSDEASSESKIAVLDSKLKEPGKEGKEGKEIKDGKEVKDVKEFKPESSLTTLKAPEKSDKVPKEKADARDIGKKRSKDGEKEKFKFSLHGSRPSSEVQYSVQSLSDCSSAIQTSHMVVYATFTPLYLFENKIFSLEKMADSAEKLREYGLSHICSHPVLVTRSRSCPLVAPPKPPPLPPWKLIRQKKETVITDEAQELIVKKPERFLEISSPFLNYRMTPFTIPTEMHFVRSLIKKGIPPGSDLPSVSETDETATHSQTDLSQITKATSQGNTASQVILGKGTDEQTDFGLGDAHQSDGLNLEREIVSQTTATQEKSQEELPTTNNSVSKEIWLDFEDFCVCFQNIYIFHKPSSYCLNFQKSEFKFSEERVSYYLFVDSLKPIELLVCFSALVRWGEYGALTKDSPPIEPGLLTAETFSWKSLKPGSLVLKIHTYATKATVVRLPVGRHMLLFNAYSPVGHSIHICSMVSFVIGDEHVVLPNFEPESCRFTEQSLLIMKAIGNVIANFKDKGKLSAALKDLQTAHYPVPFHDKELTAQHFRVFHLSLWRLMKKVQITKPPPNFKFAFRAMVLDLELLNSSLEEVSLVEWLDVKYCMPTSDKEYSAEEVAAAIKIQAMWRGTYVRLLMKARIPDTKENISVADTLQKVWAVLEMNLEQYAVSLLRLMFKSKCKSLESYPCYQDEETKIAFADYTVTYQEQPPNSWFIVFRETFLVHQDMILVPKVYTTLPICILHIVNNDTMEQVPKVFQKVVPYLYTKNKKGYTFVAEAFTGDTYVAASRWKLRLIGSSAPLPCLSRDSPCNSFAIKEIRDYYIPNDKKILFRYSVKVLTPQPATIQVRTSKPDAFIKLQVLENEETMVSSTGKGQAIIPAFHFLKSEKGLSSQSSKHILSFHSASKKEQEVYVKKKAAQGIQKSPKGRAVSAIQDIGLPLVEEETTSTPTREDSSSTPLQNYKYIIQCSVLYNSWPLTESQLTFVQALKDLKKSNTKAYGERHEELINLGSPDSHTISEGQKSSVTSKTTRKGKEKSSEKEKTAKEKQAPRFEPQISTVHPQQEDPNKPYWILRLVTEHNESELFEVKKDTERADEIRAMKQAWETTEPGRAIKASQARLHYLSGFIKKTSDAESPPISESQTKPKEEVETAARGVKEPNSKNSAGSESKEMTQTGSGSAVWKKWQLTKGLRDVAKSTSSESGGVSSPGKEEREQSTRKENIQTGPRTRSPTILETSPRLIRKALEFMDLSQYVRKTDTDPLLQTDELNQQQAMQKAEEIHQFRQHRTRVLSIRNIDQEERLKLKDEVLDMYKEMQDSLDEARQKIFDIREEYRNKLLEAEHLKLETLAAQEAAMKLETEKMTPAPDTQKKKKGKKK.

Over residues 1–11 (MASKQTKKKEV) the composition is skewed to basic residues. Disordered stretches follow at residues 1 to 45 (MASK…KGKF), 347 to 387 (SLTT…KFSL), and 540 to 566 (GSDL…ITKA). The Calpain catalytic domain maps to 70–411 (KDKTGKSPVF…SLSDCSSAIQ (342 aa)). A compositionally biased stretch (basic and acidic residues) spans 353-384 (APEKSDKVPKEKADARDIGKKRSKDGEKEKFK). The span at 554 to 566 (THSQTDLSQITKA) shows a compositional bias: polar residues. The Globin; C-terminal part domain occupies 763 to 890 (HICSMVSFVI…EEVSLVEWLD (128 aa)). Heme b is bound by residues glutamine 792 and histidine 824. The 30-residue stretch at 906–935 (EVAAAIKIQAMWRGTYVRLLMKARIPDTKE) folds into the IQ domain. One can recognise a Globin; N-terminal part domain in the interval 936–968 (NISVADTLQKVWAVLEMNLEQYAVSLLRLMFKS). Disordered regions lie at residues 1297-1355 (INLG…QQED) and 1420-1522 (TSDA…RSPT). Over residues 1301–1315 (SPDSHTISEGQKSSV) the composition is skewed to polar residues. Composition is skewed to basic and acidic residues over residues 1325 to 1340 (EKSS…KQAP) and 1433 to 1450 (TKPK…KEPN). Residues 1451-1468 (SKNSAGSESKEMTQTGSG) are compositionally biased toward polar residues. Positions 1487–1498 (STSSESGGVSSP) are enriched in low complexity. Residues 1499-1511 (GKEEREQSTRKEN) show a composition bias toward basic and acidic residues. Residues 1512 to 1522 (IQTGPRTRSPT) show a composition bias toward polar residues. Positions 1588-1629 (QEERLKLKDEVLDMYKEMQDSLDEARQKIFDIREEYRNKLLE) form a coiled coil. Residues 1646 to 1667 (KLETEKMTPAPDTQKKKKGKKK) form a disordered region.

In the central section; belongs to the globin family. It in the N-terminal section; belongs to the peptidase C2 family. As to quaternary structure, interacts with septin SEPT10; contributes to in vitro proteolytic cleavage of SEPT10 in a calmodulin-dependent manner. Interacts with CFAP69. Interacts with SPEF2. May interact with calmodulin.

It localises to the cell projection. It is found in the cilium. The protein localises to the flagellum. Functionally, probable chimeric globin with a bis-histidyl six-coordinate heme-iron atom through which it could bind dioxygen, carbon monoxide and nitric oxide. Required for sperm flagellum formation and maturation of elongating spermatids, thus playing an essential role in male fertility. This chain is Androglobin, found in Homo sapiens (Human).